The chain runs to 753 residues: 5-methyltetrahydropteroyltriglutamate--homocysteine methyltransferase (753 aa).

5-methyltetrahydropteroyltri-L-glutamate contacts are provided by residues R17–K20 and K117. Residues I431–S433 and E484 contribute to the L-homocysteine site. Residues I431 to S433 and E484 contribute to the L-methionine site. 5-methyltetrahydropteroyltri-L-glutamate is bound by residues R515–C516 and W561. D599 lines the L-homocysteine pocket. D599 contributes to the L-methionine binding site. A 5-methyltetrahydropteroyltri-L-glutamate-binding site is contributed by E605. Residues H641, C643, and E665 each coordinate Zn(2+). Catalysis depends on H694, which acts as the Proton donor. Zn(2+) is bound at residue C726.

Belongs to the vitamin-B12 independent methionine synthase family. Zn(2+) serves as cofactor.

The enzyme catalyses 5-methyltetrahydropteroyltri-L-glutamate + L-homocysteine = tetrahydropteroyltri-L-glutamate + L-methionine. It functions in the pathway amino-acid biosynthesis; L-methionine biosynthesis via de novo pathway; L-methionine from L-homocysteine (MetE route): step 1/1. Its function is as follows. Catalyzes the transfer of a methyl group from 5-methyltetrahydrofolate to homocysteine resulting in methionine formation. In Escherichia coli O6:K15:H31 (strain 536 / UPEC), this protein is 5-methyltetrahydropteroyltriglutamate--homocysteine methyltransferase.